Reading from the N-terminus, the 210-residue chain is Probable GTP-binding protein EngB (210 aa).

In terms of domain architecture, EngB-type G spans 29 to 203; sequence NGIEIAFAGR…SNKLDSWFAP (175 aa). GTP-binding positions include 37–44, 64–68, 82–85, 149–152, and 181–184; these read GRSNAGKS, GRTQL, DLPG, TKAD, and IYSA. 2 residues coordinate Mg(2+): serine 44 and threonine 66.

This sequence belongs to the TRAFAC class TrmE-Era-EngA-EngB-Septin-like GTPase superfamily. EngB GTPase family. The cofactor is Mg(2+).

In terms of biological role, necessary for normal cell division and for the maintenance of normal septation. The protein is Probable GTP-binding protein EngB of Haemophilus ducreyi (strain 35000HP / ATCC 700724).